The chain runs to 158 residues: MRIHEVNPQKGSTKRRRRIGRGISAGQGASGGFGMRGQKSRSGTGTKAGFEGGQMPLYRRVPKLKHFPLVNPSHYTIINVGKLNSLSPNTEVTLESLMEVGLITSNDGPLKVLGNGELTVPLTVRAPKFTASAKAKIESAGGSCQDLSDTSNAPSNNE.

2 disordered regions span residues 1–53 and 138–158; these read MRIH…FEGG and ESAGGSCQDLSDTSNAPSNNE. Positions 23 to 35 are enriched in gly residues; the sequence is ISAGQGASGGFGM. The segment covering 145–158 has biased composition (polar residues); it reads QDLSDTSNAPSNNE.

This sequence belongs to the universal ribosomal protein uL15 family. As to quaternary structure, part of the 50S ribosomal subunit.

Functionally, binds to the 23S rRNA. The sequence is that of Large ribosomal subunit protein uL15 from Crocosphaera subtropica (strain ATCC 51142 / BH68) (Cyanothece sp. (strain ATCC 51142)).